We begin with the raw amino-acid sequence, 720 residues long: Long chain acyl-CoA synthetase 8 (720 aa).

Met1 carries the N-acetylmethionine modification. 279-290 is a binding site for ATP; that stretch reads IMFTSGSTGLPK. The interval 554 to 582 is fatty acid-binding; sequence DEKGTRWFYTGDIGRFHPDGCLEVIDRKK.

This sequence belongs to the ATP-dependent AMP-binding enzyme family. Mg(2+) is required as a cofactor.

The enzyme catalyses a long-chain fatty acid + ATP + CoA = a long-chain fatty acyl-CoA + AMP + diphosphate. Its pathway is lipid metabolism; fatty acid metabolism. Activation of long-chain fatty acids for both synthesis of cellular lipids, and degradation via beta-oxidation. Preferentially uses palmitate, palmitoleate, oleate and linoleate. In Arabidopsis thaliana (Mouse-ear cress), this protein is Long chain acyl-CoA synthetase 8 (LACS8).